Consider the following 286-residue polypeptide: Aquaporin NIP4-1 (286 aa).

2 helical membrane passes run 59-79 (VMVE…AALM) and 86-106 (LTFP…LSWL). An NPA 1 motif is present at residues 112–114 (NPA). The next 3 helical transmembrane spans lie at 133–153 (LYVA…NAVM), 173–193 (LPFL…ATVA), and 201–221 (TVGG…IGPV). The NPA 2 motif lies at 227–229 (NPA). Residues 241–261 (YDGVWIYVVAPVAGMLVGALC) form a helical membrane-spanning segment.

The protein belongs to the MIP/aquaporin (TC 1.A.8) family. NIP (TC 1.A.8.12) subfamily. Expressed in leaves and at lower levels in roots.

Its subcellular location is the membrane. Functionally, aquaporins facilitate the transport of water and small neutral solutes across cell membranes. This Oryza sativa subsp. japonica (Rice) protein is Aquaporin NIP4-1 (NIP4-1).